The primary structure comprises 393 residues: NAD(P)H-quinone oxidoreductase subunit H, chloroplastic (393 aa).

It belongs to the complex I 49 kDa subunit family. NDH is composed of at least 16 different subunits, 5 of which are encoded in the nucleus.

The protein resides in the plastid. It localises to the chloroplast thylakoid membrane. The catalysed reaction is a plastoquinone + NADH + (n+1) H(+)(in) = a plastoquinol + NAD(+) + n H(+)(out). The enzyme catalyses a plastoquinone + NADPH + (n+1) H(+)(in) = a plastoquinol + NADP(+) + n H(+)(out). Its function is as follows. NDH shuttles electrons from NAD(P)H:plastoquinone, via FMN and iron-sulfur (Fe-S) centers, to quinones in the photosynthetic chain and possibly in a chloroplast respiratory chain. The immediate electron acceptor for the enzyme in this species is believed to be plastoquinone. Couples the redox reaction to proton translocation, and thus conserves the redox energy in a proton gradient. This chain is NAD(P)H-quinone oxidoreductase subunit H, chloroplastic, found in Nicotiana tomentosiformis (Tobacco).